We begin with the raw amino-acid sequence, 352 residues long: DNA polymerase IV (352 aa).

The UmuC domain occupies 4–185 (IIHVDMDCFF…LPLSKIPGVG (182 aa)). 2 residues coordinate Mg(2+): D8 and D103. Residue E104 is part of the active site.

It belongs to the DNA polymerase type-Y family. In terms of assembly, monomer. Mg(2+) is required as a cofactor.

The protein resides in the cytoplasm. The enzyme catalyses DNA(n) + a 2'-deoxyribonucleoside 5'-triphosphate = DNA(n+1) + diphosphate. Its function is as follows. Poorly processive, error-prone DNA polymerase involved in untargeted mutagenesis. Copies undamaged DNA at stalled replication forks, which arise in vivo from mismatched or misaligned primer ends. These misaligned primers can be extended by PolIV. Exhibits no 3'-5' exonuclease (proofreading) activity. May be involved in translesional synthesis, in conjunction with the beta clamp from PolIII. The polypeptide is DNA polymerase IV (Enterobacter sp. (strain 638)).